We begin with the raw amino-acid sequence, 423 residues long: Pre-mRNA polyadenylation factor fip-1 (423 aa).

The segment covering 1–11 (MDIDEDEDFYA) has biased composition (acidic residues). Disordered stretches follow at residues 1 to 178 (MDID…PVRT), 278 to 307 (GPGG…GGPG), and 360 to 423 (PGGG…GRRW). Over residues 19–61 (PPTTAATTTTPATTTTTAAPTTTTTTTSTTTASAPPTTTSSST) the composition is skewed to low complexity. A compositionally biased stretch (acidic residues) spans 65 to 90 (DELEEGEEEDEGGGAMDEDDDSDIDI). The segment covering 135–146 (GTNSNSNSSSNK) has biased composition (low complexity). Residues 360-415 (PGGGPGGPGTGGMGPGGPGGQGGQGQQFGGGFGGNQGQGGYGGYDQMGGAGGGGRG) are compositionally biased toward gly residues.

This sequence belongs to the FIP1 family.

The protein localises to the nucleus. Functionally, pre-mRNA polyadenylation factor that directly interacts with poly(A) polymerase. This Neurospora crassa (strain ATCC 24698 / 74-OR23-1A / CBS 708.71 / DSM 1257 / FGSC 987) protein is Pre-mRNA polyadenylation factor fip-1 (fip-1).